Reading from the N-terminus, the 187-residue chain is MATTNDLKNGMTLDIDGVLWNVVGFQHVKPGKGGAFVRTTLKNVLTGKVVDRTFNAGVKVDVATVDRREMTYLYRDGADFVFMDSESYDQIPIPPDVVGGTADYMLENTVATVALHDGAPLYVELPASVELTISQTDPGVQGDRSTGGTKPATLETGATINVPLFITSGEKVKVDTRDGRYLGRVTS.

This sequence belongs to the elongation factor P family.

It localises to the cytoplasm. The protein operates within protein biosynthesis; polypeptide chain elongation. Functionally, involved in peptide bond synthesis. Stimulates efficient translation and peptide-bond synthesis on native or reconstituted 70S ribosomes in vitro. Probably functions indirectly by altering the affinity of the ribosome for aminoacyl-tRNA, thus increasing their reactivity as acceptors for peptidyl transferase. This chain is Elongation factor P, found in Frankia casuarinae (strain DSM 45818 / CECT 9043 / HFP020203 / CcI3).